The chain runs to 238 residues: MSELKYKRVLLKLSGEALAGENKFGIDPATVSKICHEIADVVDMGLQVALVIGGGNIFRGLSSSAKGMDRSSADYMGMLATVLNALAVQDALEKLGHPTRVLSAITMQEVCEPYIRRRAERHLEKGRVVICAAGTGNPYFTTDTAAALRGMELKCEAIIKATKVDGVYDKDPMKHDDAVLFPRLTYVETLQRKLGVMDSTAITLAMENEVPIIVCNMFKGSIKRVVCGEEVGTIVQGG.

Residue 12–15 (KLSG) coordinates ATP. Residue Gly54 coordinates UMP. ATP contacts are provided by Gly55 and Arg59. Residues Asp74 and 135 to 142 (TGNPYFTT) contribute to the UMP site. Positions 162, 168, and 171 each coordinate ATP.

The protein belongs to the UMP kinase family. In terms of assembly, homohexamer.

It is found in the cytoplasm. It carries out the reaction UMP + ATP = UDP + ADP. Its pathway is pyrimidine metabolism; CTP biosynthesis via de novo pathway; UDP from UMP (UMPK route): step 1/1. Its activity is regulated as follows. Inhibited by UTP. In terms of biological role, catalyzes the reversible phosphorylation of UMP to UDP. The sequence is that of Uridylate kinase from Nitratidesulfovibrio vulgaris (strain ATCC 29579 / DSM 644 / CCUG 34227 / NCIMB 8303 / VKM B-1760 / Hildenborough) (Desulfovibrio vulgaris).